We begin with the raw amino-acid sequence, 526 residues long: Efflux pump aunC (526 aa).

The next 14 membrane-spanning stretches (helical) occupy residues 23–43 (LCYKLVLVTVGLCFCIFCTSL), 64–84 (DVGWYASAYLLTTCAVTLPFG), 89–109 (FFPIKWVYLSALFVFELGSFI), 125–145 (VAGLGGGGLFSGSLLIITQCV), 155–175 (GFIMSIFAVASVIAPLMGGAF), 183–203 (WCFYINLPFGLVSAVVIFFTF), 218–238 (AAGLDPLGTATFLPAIVCLLL), 254–274 (IIALFTLFGVLLACFVGLQLW), 296–316 (LYGFCLNGAMFTFVYYLPIWF), 339–359 (VIFAIISGVLVSATGYFGPFM), 360–380 (LLSAAMASIAAGLLSMLHPSS), 386–406 (IGYQVLLGSSIGMGFQLPVFV), 418–438 (TATALMTFIQLLGGAIFVSVA), and 491–511 (VHTFYLAIGLAAASFLAATVI).

Belongs to the major facilitator superfamily. TCR/Tet family.

Its subcellular location is the cell membrane. Its function is as follows. Efflux pump; part of the gene cluster that mediates the biosynthesis of aurasperone B, a dimeric gamma-naphthopyrone. The polypeptide is Efflux pump aunC (Aspergillus niger (strain ATCC 1015 / CBS 113.46 / FGSC A1144 / LSHB Ac4 / NCTC 3858a / NRRL 328 / USDA 3528.7)).